Reading from the N-terminus, the 558-residue chain is Potassium-transporting ATPase potassium-binding subunit (558 aa).

The next 11 helical transmembrane spans lie at 1 to 21, 59 to 79, 85 to 105, 130 to 150, 179 to 199, 245 to 265, 279 to 299, 374 to 394, 416 to 436, 484 to 504, and 527 to 547; these read MDTL…VLIH, PAYL…VYGL, FLPY…NTAV, GLAV…IALV, LSLV…FAGF, PTAW…FSLP, TAIV…LTIF, GLYG…LLVG, ILVT…IPAV, ALGV…LALA, and FVGL…FPVL.

This sequence belongs to the KdpA family. In terms of assembly, the system is composed of three essential subunits: KdpA, KdpB and KdpC.

Its subcellular location is the cell membrane. Functionally, part of the high-affinity ATP-driven potassium transport (or Kdp) system, which catalyzes the hydrolysis of ATP coupled with the electrogenic transport of potassium into the cytoplasm. This subunit binds the extracellular potassium ions and delivers the ions to the membrane domain of KdpB through an intramembrane tunnel. The chain is Potassium-transporting ATPase potassium-binding subunit from Clavibacter michiganensis subsp. michiganensis (strain NCPPB 382).